The sequence spans 397 residues: Succinate--CoA ligase [ADP-forming] subunit beta (397 aa).

Residues 9-254 form the ATP-grasp domain; it reads KALLKGYGAP…ETEEDAKEIE (246 aa). Residues lysine 46, 53–55, glutamate 109, alanine 112, and glutamate 117 contribute to the ATP site; that span reads GRG. Mg(2+)-binding residues include asparagine 209 and aspartate 223. Substrate contacts are provided by residues asparagine 274 and 331–333; that span reads GIM.

The protein belongs to the succinate/malate CoA ligase beta subunit family. Heterotetramer of two alpha and two beta subunits. The cofactor is Mg(2+).

The enzyme catalyses succinate + ATP + CoA = succinyl-CoA + ADP + phosphate. It catalyses the reaction GTP + succinate + CoA = succinyl-CoA + GDP + phosphate. It functions in the pathway carbohydrate metabolism; tricarboxylic acid cycle; succinate from succinyl-CoA (ligase route): step 1/1. Its function is as follows. Succinyl-CoA synthetase functions in the citric acid cycle (TCA), coupling the hydrolysis of succinyl-CoA to the synthesis of either ATP or GTP and thus represents the only step of substrate-level phosphorylation in the TCA. The beta subunit provides nucleotide specificity of the enzyme and binds the substrate succinate, while the binding sites for coenzyme A and phosphate are found in the alpha subunit. This chain is Succinate--CoA ligase [ADP-forming] subunit beta, found in Rhizobium johnstonii (strain DSM 114642 / LMG 32736 / 3841) (Rhizobium leguminosarum bv. viciae).